The sequence spans 284 residues: Putative ABC transporter ATP-binding protein tll2439 (284 aa).

An ABC transporter domain is found at 6–242 (LEFHQVGFRY…WPTFAPELGT (237 aa)). 40-47 (GLNGSGKS) provides a ligand contact to ATP.

The protein belongs to the ABC transporter superfamily.

The protein localises to the cell inner membrane. Probably part of an ABC transporter complex. Responsible for energy coupling to the transport system. This chain is Putative ABC transporter ATP-binding protein tll2439, found in Thermosynechococcus vestitus (strain NIES-2133 / IAM M-273 / BP-1).